Reading from the N-terminus, the 72-residue chain is Aurein-2.2 (72 aa).

The N-terminal stretch at 1 to 22 (MAFLKKSLFLVLFLGLVSLSIC) is a signal peptide. Residues 23–49 (EKEKRQNEEDEDENEAANHEEGSEEKR) constitute a propeptide that is removed on maturation. Residues 27–47 (RQNEEDEDENEAANHEEGSEE) form a disordered region. Positions 38–47 (AANHEEGSEE) are enriched in basic and acidic residues. Leucine amide is present on L65. Positions 69-72 (NDLE) are excised as a propeptide.

In terms of processing, amidation is essential for antibacterial activity against Gram-positive bacteria. As to expression, expressed by the skin dorsal glands.

It localises to the secreted. The protein resides in the target cell membrane. Functionally, amphipathic alpha-helical antimicrobial peptide with weak to moderate activity against Gram-positive bacteria, and no activity against Gram-negative bacteria. Probably acts by disturbing membrane functions with its amphipathic structure. Strongly inhibits the formation of NO by neuronal nitric oxide synthase (nNOS) at micromolar concentrations. Acts by a non-competitive mechanism, probably by binding to calcium/calmodulin and as a consequence blocking calmodulin attachment to nNOS. In Ranoidea aurea (Green and golden bell frog), this protein is Aurein-2.2.